We begin with the raw amino-acid sequence, 358 residues long: Protein SGT1 homolog B (358 aa).

3 TPR repeats span residues 2–35, 37–69, and 70–103; these read AKEL…DPNC, AFFA…EPTL, and AKAY…APNE. One can recognise a CS domain in the interval 157-246; that stretch reads KPMFRHEFYQ…AEIITWASLE (90 aa). Residues 255–275 are disordered; that stretch reads PKPNVSSALSQRPVYPSSKPA. Positions 268-358 constitute an SGS domain; that stretch reads VYPSSKPAKD…DGMELKKWEY (91 aa).

Belongs to the SGT1 family. In terms of assembly, interacts with RAR1 and HSP90-2. Interacts (via SGS domain) with HSC70-1 and HSC70-3.

It is found in the cytoplasm. The protein resides in the nucleus. In terms of biological role, involved in plant innate immunity. Essential for race-specific resistance conferred by multiple R genes, including RPP7, recognizing different oomycete pathogen isolates like avirulent Hyaloperonospora arabidopsidis (downy mildew). Contributes additively with RAR1 to RPP5-dependent resistance. Not required for RPM1, RPS2, RPS4 and RPS5-mediated resistance. Functions as a negative regulator of RPS5 accumulation by assisting its degradation. May be involved in heat shock response by associating with HSC70-1 chaperone. Required for the SCF(TIR1)-mediated degradation of Aux/IAA proteins, but maybe not for SCF(TIR1) assembly or binding to its Aux/IAA substrates. Probably required for SCF-mediated ubiquitination, by coupling HSP90 to SCF complex for ubiquitination of HSP90 client proteins. Required for the coronatine/jasmonic acid-mediated signal transduction pathway. The protein is Protein SGT1 homolog B of Arabidopsis thaliana (Mouse-ear cress).